The chain runs to 154 residues: MPSRTARYARYSPRQRRRRMLADRSVRFPNDVLFLDHIRQGDLEQVGRFIRTRKVSLATIHPSGLAALHEAVLSGNLECVKLLVKYGADIHQRDEAGWTPLHIACSDGYPDIARYLISLGADRDATNDDGDLPSDLIDPDYKELVELFKGTTMD.

2 ANK repeats span residues 63–92 and 96–125; these read SGLAALHEAVLSGNLECVKLLVKYGADIHQ and AGWTPLHIACSDGYPDIARYLISLGADRDA.

In terms of assembly, interacts with DYSF and PPP1CA.

In terms of biological role, inhibits phosphatase activity of protein phosphatase 1 (PP1) complexes. The sequence is that of Protein phosphatase 1 regulatory subunit 27 (PPP1R27) from Homo sapiens (Human).